The following is a 245-amino-acid chain: Probable transcriptional regulatory protein Cbei_4222 (245 aa).

It belongs to the TACO1 family.

The protein localises to the cytoplasm. The polypeptide is Probable transcriptional regulatory protein Cbei_4222 (Clostridium beijerinckii (strain ATCC 51743 / NCIMB 8052) (Clostridium acetobutylicum)).